The primary structure comprises 128 residues: Fluoride-specific ion channel FluC (128 aa).

Transmembrane regions (helical) follow at residues A5–I25, T32–A52, F70–L90, and V106–I126. Positions 77 and 80 each coordinate Na(+).

It belongs to the fluoride channel Fluc/FEX (TC 1.A.43) family.

It localises to the cell inner membrane. It catalyses the reaction fluoride(in) = fluoride(out). Its activity is regulated as follows. Na(+) is not transported, but it plays an essential structural role and its presence is essential for fluoride channel function. In terms of biological role, fluoride-specific ion channel. Important for reducing fluoride concentration in the cell, thus reducing its toxicity. The protein is Fluoride-specific ion channel FluC of Paramagnetospirillum magneticum (strain ATCC 700264 / AMB-1) (Magnetospirillum magneticum).